Consider the following 434-residue polypeptide: UPF0597 protein CLK_1462 (434 aa).

The protein belongs to the UPF0597 family.

The protein is UPF0597 protein CLK_1462 of Clostridium botulinum (strain Loch Maree / Type A3).